A 192-amino-acid chain; its full sequence is Probable apo-citrate lyase phosphoribosyl-dephospho-CoA transferase (192 aa).

The protein belongs to the CitX family.

The enzyme catalyses apo-[citrate lyase ACP] + 2'-(5''-triphospho-alpha-D-ribosyl)-3'-dephospho-CoA = holo-[citrate lyase ACP] + diphosphate. Functionally, transfers 2-(5''-triphosphoribosyl)-3'-dephosphocoenzyme-A on a serine residue to the apo-acyl carrier protein (gamma chain) of the citrate lyase to yield holo-acyl carrier protein. The polypeptide is Probable apo-citrate lyase phosphoribosyl-dephospho-CoA transferase (Streptococcus pyogenes serotype M6 (strain ATCC BAA-946 / MGAS10394)).